Reading from the N-terminus, the 250-residue chain is 2,3-bisphosphoglycerate-dependent phosphoglycerate mutase (250 aa).

Residues arginine 10–asparagine 17, threonine 23–glycine 24, arginine 62, glutamate 89–tyrosine 92, lysine 100, arginine 116–arginine 117, and glycine 185–asparagine 186 each bind substrate. The active-site Tele-phosphohistidine intermediate is histidine 11. Glutamate 89 serves as the catalytic Proton donor/acceptor.

It belongs to the phosphoglycerate mutase family. BPG-dependent PGAM subfamily. As to quaternary structure, homodimer.

It catalyses the reaction (2R)-2-phosphoglycerate = (2R)-3-phosphoglycerate. The protein operates within carbohydrate degradation; glycolysis; pyruvate from D-glyceraldehyde 3-phosphate: step 3/5. Catalyzes the interconversion of 2-phosphoglycerate and 3-phosphoglycerate. This Salmonella choleraesuis (strain SC-B67) protein is 2,3-bisphosphoglycerate-dependent phosphoglycerate mutase.